We begin with the raw amino-acid sequence, 341 residues long: Glyceraldehyde-3-phosphate dehydrogenase 2 (341 aa).

Residues 12-13 (RI), Arg78, and Thr120 contribute to the NAD(+) site. D-glyceraldehyde 3-phosphate contacts are provided by residues 152–154 (SCT) and Thr183. Catalysis depends on Cys153, which acts as the Nucleophile. Asn184 is a binding site for NAD(+). D-glyceraldehyde 3-phosphate contacts are provided by residues Arg198, 211-212 (TG), and Arg234. An NAD(+)-binding site is contributed by Asn313.

The protein belongs to the glyceraldehyde-3-phosphate dehydrogenase family. As to quaternary structure, homotetramer.

The protein localises to the cytoplasm. The enzyme catalyses D-glyceraldehyde 3-phosphate + phosphate + NAD(+) = (2R)-3-phospho-glyceroyl phosphate + NADH + H(+). The protein operates within carbohydrate degradation; glycolysis; pyruvate from D-glyceraldehyde 3-phosphate: step 1/5. Catalyzes the oxidative phosphorylation of glyceraldehyde 3-phosphate (G3P) to 1,3-bisphosphoglycerate (BPG) using the cofactor NAD. The first reaction step involves the formation of a hemiacetal intermediate between G3P and a cysteine residue, and this hemiacetal intermediate is then oxidized to a thioester, with concomitant reduction of NAD to NADH. The reduced NADH is then exchanged with the second NAD, and the thioester is attacked by a nucleophilic inorganic phosphate to produce BPG. The sequence is that of Glyceraldehyde-3-phosphate dehydrogenase 2 (gapA2) from Staphylococcus aureus (strain COL).